The chain runs to 888 residues: Autotaxin (888 aa).

Residues 1 to 27 (MARRRSCQLHQVISLFTFAVGVNICLG) form the signal peptide. Residues 28 to 35 (VTANRIKR) constitute a propeptide, removed by furin. A glycan (N-linked (GlcNAc...) asparagine) is linked at N54. SMB domains lie at 55–98 (ISGS…LKTA) and 99–143 (GGWE…GESH). Disulfide bonds link C59–C76, C63–C94, C74–C87, C80–C86, C103–C120, C108–C138, C118–C131, C124–C130, C149–C195, and C157–C351. The short motif at 127 to 129 (RGD) is the Cell attachment site element. Residues 145–502 (VDDDCEEIKT…PTFKYKTKVP (358 aa)) form a phosphodiesterase region. Residues D172 and T210 each coordinate Zn(2+). The Nucleophile role is filled by T210. Positions 210, 231, and 312 each coordinate 1-(9Z-octadecenoyl)-sn-glycero-3-phosphate. The 1-hexadecanoyl-sn-glycero-3-phosphate site is built by T210, N231, and D312. The 1-tetradecanoyl-sn-glycerol 3-phosphate site is built by T210, N231, and D312. Positions 312, 316, 359, and 360 each coordinate Zn(2+). Cystine bridges form between C367/C469, C414/C831, C567/C692, C569/C677, and C800/C810. Residue N411 is glycosylated (N-linked (GlcNAc...) asparagine). H475 is a Zn(2+) binding site. Residue H475 coordinates 1-(9Z-octadecenoyl)-sn-glycero-3-phosphate. Residue H475 coordinates 1-hexadecanoyl-sn-glycero-3-phosphate. H475 serves as a coordination point for 1-tetradecanoyl-sn-glycerol 3-phosphate. N525 is a glycosylation site (N-linked (GlcNAc...) asparagine). The nuclease-like domain stretch occupies residues 623 to 888 (LYGRPAVLYR…TYLQTYESEI (266 aa)). The Ca(2+) site is built by D765, D767, D769, L771, and D773. N-linked (GlcNAc...) asparagine glycosylation is present at N832. Positions 855-876 (IEHLTSLDFFRKTSRSYPEILT) are required for secretion.

Belongs to the nucleotide pyrophosphatase/phosphodiesterase family. Zn(2+) is required as a cofactor. The cofactor is Ca(2+). N-glycosylation, but not furin-cleavage, plays a critical role on secretion and on lysoPLD activity. Post-translationally, the interdomain disulfide bond between Cys-414 and Cys-831 is essential for catalytic activity. Detected in fetal serum (at protein level).

It localises to the secreted. It catalyses the reaction a 1-O-alkyl-sn-glycero-3-phosphoethanolamine + H2O = a 1-O-alkyl-sn-glycero-3-phosphate + ethanolamine + H(+). The enzyme catalyses a 1-acyl-sn-glycero-3-phosphoethanolamine + H2O = a 1-acyl-sn-glycero-3-phosphate + ethanolamine + H(+). The catalysed reaction is 1-(9Z-octadecenoyl)-sn-glycero-3-phosphoethanolamine + H2O = 1-(9Z-octadecenoyl)-sn-glycero-3-phosphate + ethanolamine + H(+). It carries out the reaction a 1-O-alkyl-sn-glycero-3-phosphocholine + H2O = a 1-O-alkyl-sn-glycero-3-phosphate + choline + H(+). It catalyses the reaction 1-O-(9Z-octadecenyl)-sn-glycero-3-phosphocholine + H2O = 1-O-(9Z-octadecenyl)-sn-glycero-3-phosphate + choline + H(+). The enzyme catalyses 1-O-hexadecyl-sn-glycero-3-phosphocholine + H2O = 1-O-hexadecyl-sn-glycero-3-phosphate + choline + H(+). The catalysed reaction is a 1-O-(1Z-alkenyl)-sn-glycero-3-phosphocholine + H2O = a 1-O-(1Z-alkenyl)-sn-glycero-3-phosphate + choline + H(+). It carries out the reaction a 1-acyl-sn-glycero-3-phosphocholine + H2O = a 1-acyl-sn-glycero-3-phosphate + choline + H(+). It catalyses the reaction 1-dodecanoyl-sn-glycero-3-phosphocholine + H2O = 1-dodecanoyl-sn-glycerol 3-phosphate + choline + H(+). The enzyme catalyses 1-(9Z-octadecenoyl)-sn-glycero-3-phosphocholine + H2O = 1-(9Z-octadecenoyl)-sn-glycero-3-phosphate + choline + H(+). The catalysed reaction is 1-tetradecanoyl-sn-glycero-3-phosphocholine + H2O = 1-tetradecanoyl-sn-glycerol 3-phosphate + choline + H(+). It carries out the reaction 1-decanoyl-sn-glycero-3-phosphocholine + H2O = 1-decanoyl-sn-glycero-3-phosphate + choline + H(+). It catalyses the reaction 1-octadecanoyl-sn-glycero-3-phosphocholine + H2O = 1-octadecanoyl-sn-glycero-3-phosphate + choline + H(+). The enzyme catalyses 1-hexadecanoyl-sn-glycero-3-phosphocholine + H2O = 1-hexadecanoyl-sn-glycero-3-phosphate + choline + H(+). The catalysed reaction is 1-hexanoyl-sn-glycero-3-phosphocholine + H2O = 1-hexanoyl-sn-glycero-3-phosphate + choline + H(+). It carries out the reaction 1-(9Z,12Z)-octadecadienoyl-sn-glycero-3-phosphocholine + H2O = 1-(9Z,12Z)-octadecadienoyl-sn-glycero-3-phosphate + choline + H(+). It catalyses the reaction sphing-4-enine-phosphocholine + H2O = sphing-4-enine 1-phosphate + choline + H(+). The enzyme catalyses 1-(5Z,8Z,11Z,14Z-eicosatetraenoyl)-sn-glycero-3-phosphocholine + H2O = 1-(5Z,8Z,11Z,14Z-eicosatetraenoyl)-sn-glycero-3-phosphate + choline + H(+). The catalysed reaction is a 2-acyl-sn-glycero-3-phosphocholine + H2O = a 2-acyl-sn-glycerol 3-phosphate + choline + H(+). It carries out the reaction a 1,2-diacyl-sn-glycero-3-phosphocholine + H2O = a 1,2-diacyl-sn-glycero-3-phosphate + choline + H(+). It catalyses the reaction 1,2-dioctanoyl-sn-glycero-3-phosphocholine + H2O = 1,2-dioctanoyl-sn-glycero-3-phosphate + choline + H(+). The enzyme catalyses 1,2-didecanoyl-sn-glycero-3-phosphocholine + H2O = 1,2-didecanoyl-sn-glycero-3-phosphate + choline + H(+). The catalysed reaction is a 1-acyl-sn-glycero-3-phospho-L-serine + H2O = a 1-acyl-sn-glycero-3-phosphate + L-serine + H(+). It carries out the reaction 1-(9Z-octadecenoyl)-sn-glycero-3-phospho-L-serine + H2O = 1-(9Z-octadecenoyl)-sn-glycero-3-phosphate + L-serine + H(+). It catalyses the reaction a 2-acyl-sn-glycero-3-phospho-L-serine + H2O = a 2-acyl-sn-glycerol 3-phosphate + L-serine + H(+). In terms of biological role, secreted lysophospholipase D that hydrolyzes lysophospholipids to produce the signaling molecule lysophosphatidic acid (LPA) in extracellular fluids. Its major substrate is lysophosphatidylcholine. Can also act on sphingosylphosphorylcholine producing sphingosine-1-phosphate, a modulator of cell motility. Can hydrolyze, in vitro, bis-pNPP, to some extent pNP-TMP, and barely ATP. Involved in several motility-related processes such as angiogenesis and neurite outgrowth. Acts as an angiogenic factor by stimulating migration of smooth muscle cells and microtubule formation. Stimulates migration of melanoma cells, probably via a pertussis toxin-sensitive G protein. May have a role in induction of parturition. Possible involvement in cell proliferation and adipose tissue development. Required for LPA production in activated platelets, cleaves the sn-1 lysophospholipids to generate sn-1 lysophosphatidic acids containing predominantly 18:2 and 20:4 fatty acids. Shows a preference for the sn-1 to the sn-2 isomer of 1-O-alkyl-sn-glycero-3-phosphocholine (lyso-PAF). This is Autotaxin from Bos taurus (Bovine).